A 415-amino-acid polypeptide reads, in one-letter code: MHFGIPSLFYLYILFSIIMRIKCVITKNLKKTKKRTCSYIPHGNMEKGIILNYIEKPNPAYLKRGKNKNKNKNKKGDIYKLRNVEILLYANRYVHEGNENFSSTTKKLLLTPKVGNKMPEGKKPDWFHVAAPTVAKYNKLKDDIKKLNLHTVCEEAQCPNIGECWNIGTATIMLLGDTCTRGCKFCSIKTSSNPLPPDINEPFNTAKAICEWNIDYVVLTSVDRDDLPDGGASHFAKTVELVKFSRPDILIECLVSDFQGNIDSVRKLAFSGLDVYAHNIETVKRLQKYVRDKRANYDQSLFVLKTAKEINPQLYTKTSIMLGLGETKEEVIQTMYDARKNNIDVITFGQYLRPTKNHLSIVQYISPQMFEYYKEEGLKMGFKYIASGPLVRSSYKAGEYFIKNLVNQRNKDKKN.

Residues 1–23 form the signal peptide; the sequence is MHFGIPSLFYLYILFSIIMRIKC. Cys153, Cys158, Cys164, Cys179, Cys183, Cys186, and Ser394 together coordinate [4Fe-4S] cluster. The region spanning 165–383 is the Radical SAM core domain; sequence WNIGTATIML…KEEGLKMGFK (219 aa).

The protein belongs to the radical SAM superfamily. Lipoyl synthase family. It depends on [4Fe-4S] cluster as a cofactor.

The protein localises to the plastid. It is found in the apicoplast. It carries out the reaction [[Fe-S] cluster scaffold protein carrying a second [4Fe-4S](2+) cluster] + N(6)-octanoyl-L-lysyl-[protein] + 2 oxidized [2Fe-2S]-[ferredoxin] + 2 S-adenosyl-L-methionine + 4 H(+) = [[Fe-S] cluster scaffold protein] + N(6)-[(R)-dihydrolipoyl]-L-lysyl-[protein] + 4 Fe(3+) + 2 hydrogen sulfide + 2 5'-deoxyadenosine + 2 L-methionine + 2 reduced [2Fe-2S]-[ferredoxin]. Its pathway is protein modification; protein lipoylation via endogenous pathway; protein N(6)-(lipoyl)lysine from octanoyl-[acyl-carrier-protein]: step 2/2. In terms of biological role, catalyzes the radical-mediated insertion of two sulfur atoms into the C-6 and C-8 positions of the octanoyl moiety bound to the lipoyl domains of lipoate-dependent enzymes, thereby converting the octanoylated domains into lipoylated derivatives. The chain is Lipoyl synthase, apicoplast from Plasmodium falciparum (isolate 3D7).